Consider the following 413-residue polypeptide: Extracellular sucrase (413 aa).

Asp-44 (nucleophile) is an active-site residue. The active-site Proton donor/acceptor is the Glu-276.

The protein belongs to the glycosyl hydrolase 68 family.

It localises to the secreted. The catalysed reaction is Hydrolysis of terminal non-reducing beta-D-fructofuranoside residues in beta-D-fructofuranosides.. The sequence is that of Extracellular sucrase (sacC) from Zymomonas mobilis subsp. mobilis (strain ATCC 10988 / DSM 424 / LMG 404 / NCIMB 8938 / NRRL B-806 / ZM1).